Here is a 721-residue protein sequence, read N- to C-terminus: Nitrogen permease regulator 3 (721 aa).

The N-terminal stretch at 1 to 21 (MSYNLPNPSLIGILLIISTHS) is a signal peptide. 2 disordered regions span residues 27 to 54 (YKQP…ETES) and 555 to 614 (DLEN…NINA). The span at 37-54 (PDEDEGEYDQEDIAETES) shows a compositional bias: acidic residues.

This sequence belongs to the NPR3 family.

Functionally, mediates inactivation of the TORC1 complex in response to amino acid starvation. Required for meiotic nuclear division. The protein is Nitrogen permease regulator 3 (NPR3) of Scheffersomyces stipitis (strain ATCC 58785 / CBS 6054 / NBRC 10063 / NRRL Y-11545) (Yeast).